The sequence spans 354 residues: Probable calcium-binding protein CML50 (354 aa).

Low complexity-rich tracts occupy residues M1–G10 and Y28–G71. The segment at M1–Y159 is disordered. Positions A72–P81 are enriched in pro residues. Low complexity predominate over residues G106 to P117. 2 EF-hand domains span residues G183–R218 and Y249–S284. Ca(2+)-binding residues include D196, D198, S200, E207, D262, D264, S266, R268, and E273.

Functionally, potential calcium sensor. The polypeptide is Probable calcium-binding protein CML50 (CML50) (Arabidopsis thaliana (Mouse-ear cress)).